The sequence spans 309 residues: Ferrochelatase (309 aa).

2 residues coordinate Fe cation: H185 and E264.

It belongs to the ferrochelatase family.

The protein resides in the cytoplasm. It catalyses the reaction heme b + 2 H(+) = protoporphyrin IX + Fe(2+). The protein operates within porphyrin-containing compound metabolism; protoheme biosynthesis; protoheme from protoporphyrin-IX: step 1/1. Its function is as follows. Catalyzes the ferrous insertion into protoporphyrin IX. In Aquifex aeolicus (strain VF5), this protein is Ferrochelatase.